A 353-amino-acid chain; its full sequence is DNA polymerase IV (353 aa).

The region spanning 6 to 187 (IIHIDCDCFY…LPVTKLHGVG (182 aa)) is the UmuC domain. Mg(2+) is bound by residues aspartate 10 and aspartate 105. The active site involves glutamate 106.

The protein belongs to the DNA polymerase type-Y family. As to quaternary structure, monomer. Mg(2+) serves as cofactor.

It is found in the cytoplasm. The enzyme catalyses DNA(n) + a 2'-deoxyribonucleoside 5'-triphosphate = DNA(n+1) + diphosphate. Poorly processive, error-prone DNA polymerase involved in untargeted mutagenesis. Copies undamaged DNA at stalled replication forks, which arise in vivo from mismatched or misaligned primer ends. These misaligned primers can be extended by PolIV. Exhibits no 3'-5' exonuclease (proofreading) activity. May be involved in translesional synthesis, in conjunction with the beta clamp from PolIII. This is DNA polymerase IV from Pseudomonas savastanoi pv. phaseolicola (strain 1448A / Race 6) (Pseudomonas syringae pv. phaseolicola (strain 1448A / Race 6)).